The following is a 25-amino-acid chain: Repetitive proline-rich cell wall protein (25 aa).

The disordered stretch occupies residues 1–25; the sequence is NYDKPPVEKPPVYKPPVEKPPVYKP. A run of 4 repeats spans residues 5–9, 10–14, 15–19, and 20–24. Residues 5–24 form a 4 X 5 AA tandem repeats of P-P-V-[EY]-K region; that stretch reads PPVEKPPVYKPPVEKPPVYK. P6, P11, P16, and P21 each carry 4-hydroxyproline. The segment covering 8 to 25 has biased composition (pro residues); that stretch reads EKPPVYKPPVEKPPVYKP.

This sequence belongs to the plant proline-rich protein superfamily. ENOD12 family.

The protein resides in the secreted. It is found in the cell wall. In Phaseolus vulgaris (Kidney bean), this protein is Repetitive proline-rich cell wall protein.